An 878-amino-acid polypeptide reads, in one-letter code: AP-5 complex subunit beta-1 (878 aa).

Positions Arg234–Ser260 are disordered. Over residues Gly250 to Ser260 the composition is skewed to basic and acidic residues.

As to quaternary structure, probably part of the adaptor protein complex 5 (AP-5), a tetramer composed of AP5B1, AP5M1, AP5S1 and AP5Z1. Interacts with ZFYVE26 and SPG11.

Its function is as follows. As part of AP-5, a probable fifth adaptor protein complex it may be involved in endosomal transport. The chain is AP-5 complex subunit beta-1 (AP5B1) from Homo sapiens (Human).